The primary structure comprises 234 residues: Sugar fermentation stimulation protein homolog (234 aa).

This sequence belongs to the SfsA family.

The polypeptide is Sugar fermentation stimulation protein homolog (Enterobacter sp. (strain 638)).